A 358-amino-acid chain; its full sequence is Electron transfer flavoprotein subunit alpha, mitochondrial (358 aa).

FAD is bound at residue 298–326 (LYMAFGVSGAIQHLAGMRDSKVIVAVNKD).

Belongs to the ETF alpha-subunit/FixB family. In terms of assembly, heterodimer of an alpha and a beta subunit. FAD is required as a cofactor.

Its subcellular location is the mitochondrion matrix. In terms of biological role, the electron transfer flavoprotein serves as a specific electron acceptor for several dehydrogenases, including five acyl-CoA dehydrogenases, glutaryl-CoA and sarcosine dehydrogenase. It transfers the electrons to the main mitochondrial respiratory chain via ETF-ubiquinone oxidoreductase (ETF dehydrogenase). This chain is Electron transfer flavoprotein subunit alpha, mitochondrial (ETFA), found in Oryza sativa subsp. indica (Rice).